The sequence spans 993 residues: uncharacterized protein (993 aa).

A signal peptide spans 1 to 24; sequence MLLFKFNFTTAFLFTILAFAQARS. N-linked (GlcNAc...) asparagine glycans are attached at residues Asn-7, Asn-44, Asn-89, Asn-121, Asn-138, Asn-161, Asn-169, Asn-232, Asn-361, Asn-386, Asn-393, Asn-423, Asn-447, Asn-480, and Asn-488. Glu-504 is a catalytic residue. 3 N-linked (GlcNAc...) asparagine glycosylation sites follow: Asn-545, Asn-548, and Asn-614. The active-site Proton donor is Asp-672. N-linked (GlcNAc...) asparagine glycans are attached at residues Asn-673, Asn-814, Asn-826, Asn-835, Asn-846, Asn-910, Asn-940, and Asn-987.

The protein belongs to the glycosyl hydrolase 31 family.

This is an uncharacterized protein from Schizosaccharomyces pombe (strain 972 / ATCC 24843) (Fission yeast).